The chain runs to 200 residues: Methyl-coenzyme M reductase I operon protein C (200 aa).

MCR is composed of three subunits: alpha, beta, and gamma. The function of proteins C and D is not known.

The chain is Methyl-coenzyme M reductase I operon protein C (mcrC) from Methanocaldococcus jannaschii (strain ATCC 43067 / DSM 2661 / JAL-1 / JCM 10045 / NBRC 100440) (Methanococcus jannaschii).